A 134-amino-acid polypeptide reads, in one-letter code: S-protein homolog 18 (134 aa).

Residues 1 to 25 (MCPSSFRLILSVILIAFLFVGLCEA) form the signal peptide. An N-linked (GlcNAc...) asparagine glycan is attached at Asn87.

It belongs to the plant self-incompatibility (S1) protein family.

The protein resides in the secreted. This Arabidopsis thaliana (Mouse-ear cress) protein is S-protein homolog 18.